Reading from the N-terminus, the 115-residue chain is Tyrosine-protein phosphatase 22 (115 aa).

A Tyrosine-protein phosphatase domain is found at 1-115 (WLMIVEQKCR…ETGGDAPMVV (115 aa)). A substrate-binding site is contributed by Asp83.

It belongs to the protein-tyrosine phosphatase family.

It carries out the reaction O-phospho-L-tyrosyl-[protein] + H2O = L-tyrosyl-[protein] + phosphate. The sequence is that of Tyrosine-protein phosphatase 22 (STY-22) from Styela plicata (Wrinkled sea squirt).